The sequence spans 479 residues: Zinc metalloproteinase/disintegrin (479 aa).

Positions 1-20 are cleaved as a signal peptide; it reads MIQVLLVTICLAAFPYQGSS. The propeptide occupies 21–187; it reads IILESGKVND…PIKKASQLIV (167 aa). Positions 193–390 constitute a Peptidase M12B domain; it reads RYMEIVIVVD…ENPPCILNKP (198 aa). Ca(2+) is bound by residues E196 and D280. 3 cysteine pairs are disulfide-bonded: C304/C385, C344/C369, and C346/C352. H329 serves as a coordination point for Zn(2+). E330 is a catalytic residue. H333 and H339 together coordinate Zn(2+). Ca(2+) contacts are provided by C385 and N388. Residues 390–414 constitute a propeptide that is removed on maturation; it reads PLRTDTVSTPVSGNELLEAGKDYDR. The Disintegrin domain occupies 398 to 479; sequence TPVSGNELLE…ADCPRNPYHA (82 aa). Cystine bridges form between C435–C441, C440–C465, and C453–C472. The Cell attachment site motif lies at 457–459; the sequence is RGD.

It belongs to the venom metalloproteinase (M12B) family. P-II subfamily. P-IIa sub-subfamily. Monomer. Requires Zn(2+) as cofactor. As to expression, expressed by the venom gland.

The protein resides in the secreted. Snake venom metalloproteinase that impairs hemostasis in the envenomed animal. Functionally, inhibits platelet aggregation induced by ADP, thrombin, platelet-activating factor and collagen. Acts by inhibiting fibrinogen interaction with platelet receptors GPIIb/GPIIIa (ITGA2B/ITGB3). In Deinagkistrodon acutus (Hundred-pace snake), this protein is Zinc metalloproteinase/disintegrin.